A 1516-amino-acid polypeptide reads, in one-letter code: UDP-glucose:glycoprotein glucosyltransferase 2 (1516 aa).

The N-terminal stretch at 1 to 27 (MAPAKATNVVRLLLGSTALWLSQLGSG) is a signal peptide. Residues N256, N286, N920, and N950 are each glycosylated (N-linked (GlcNAc...) asparagine). The glucosyltransferase stretch occupies residues 1220-1516 (LHKENKKEKD…QDTILTHDEL (297 aa)). Position 1289 is a phosphotyrosine (Y1289). Positions 1513–1516 (HDEL) match the Prevents secretion from ER motif.

The protein belongs to the glycosyltransferase 8 family. Interacts with METTL23. Interacts with SELENOF. Ca(2+) serves as cofactor. The cofactor is Mn(2+). In terms of tissue distribution, higher levels in kidney, pancreas, heart, and skeletal muscle.

Its subcellular location is the endoplasmic reticulum lumen. The protein localises to the endoplasmic reticulum-Golgi intermediate compartment. It carries out the reaction N(4)-(alpha-D-Man-(1-&gt;2)-alpha-D-Man-(1-&gt;2)-alpha-D-Man-(1-&gt;3)-[alpha-D-Man-(1-&gt;2)-alpha-D-Man-(1-&gt;3)-[alpha-D-Man-(1-&gt;2)-alpha-D-Man-(1-&gt;6)]-alpha-D-Man-(1-&gt;6)]-beta-D-Man-(1-&gt;4)-beta-D-GlcNAc-(1-&gt;4)-beta-D-GlcNAc)-L-asparaginyl-[protein] (N-glucan mannose isomer 9A1,2,3B1,2,3) + UDP-alpha-D-glucose = N(4)-(alpha-D-Glc-(1-&gt;3)-alpha-D-Man-(1-&gt;2)-alpha-D-Man-(1-&gt;2)-alpha-D-Man-(1-&gt;3)-[alpha-D-Man-(1-&gt;2)-alpha-D-Man-(1-&gt;3)-[alpha-D-Man-(1-&gt;2)-alpha-D-Man-(1-&gt;6)]-alpha-D-Man-(1-&gt;6)]-beta-D-Man-(1-&gt;4)-beta-D-GlcNAc-(1-&gt;4)-beta-D-GlcNAc)-L-asparaginyl-[protein] + UDP + H(+). It functions in the pathway protein modification; protein glycosylation. Its activity is regulated as follows. Ethylenediaminetetraacetic acid completely abolishes catalytic activity. Catalytic activity is enhanced by complex formation with SELENOF. Its function is as follows. Recognizes glycoproteins with minor folding defects. Reglucosylates single N-glycans near the misfolded part of the protein, thus providing quality control for protein folding in the endoplasmic reticulum. Reglucosylated proteins are recognized by calreticulin for recycling to the endoplasmic reticulum and refolding or degradation. This is UDP-glucose:glycoprotein glucosyltransferase 2 (UGGT2) from Homo sapiens (Human).